The sequence spans 1899 residues: Protocadherin-15 (1899 aa).

Residues 1 to 26 form the signal peptide; the sequence is MLQQFCLWKWLAVGIAVATILASSLA. The Extracellular segment spans residues 27-1376; the sequence is QNDEDCKLAR…AQAVGYTEGA (1350 aa). Cysteine 32 and cysteine 120 are oxidised to a cystine. Cadherin domains are found at residues 38–147, 148–265, 278–395, 396–509, 510–616, 617–717, 719–819, 820–926, 927–1035, 1037–1144, and 1145–1259; these read GPPA…SPQF, QQQR…GPMF, RPLT…KPYF, TKST…SPTF, SNIS…PPRF, PQLM…GPVF, MFLP…SPVF, TNAS…SPVF, SKTL…IPRF, QDEY…APVF, and TKKM…PPTL. Residues 1377–1397 form a helical membrane-spanning segment; that stretch reads LLALAVIIILCCMPAILIVMV. Topologically, residues 1398–1899 are cytoplasmic; it reads SYRQRQAECA…KRFPSQSTAL (502 aa). Disordered regions lie at residues 1668–1687, 1700–1721, and 1734–1820; these read SPCLRSSPLSSPTPCEVVEP, HDYPEELSPPPTRKPTPPSFRI, and TKGE…RREL. Composition is skewed to pro residues over residues 1706–1717 and 1743–1773; these read LSPPPTRKPTPP and PDPPKTPPPPPPLLPPPPPSPPLLPPHPPTL. The span at 1774–1791 shows a compositional bias: low complexity; that stretch reads PLASVPSSSSLPSTQHLS. The segment covering 1804 to 1814 has biased composition (pro residues); the sequence is AVPPPAAVPEP.

As to expression, in the utricle, localizes to the distal region of the kinocilium and near the tips of the stereocilia.

The protein localises to the cell membrane. Calcium-dependent cell-adhesion protein. Required for inner ear neuroepithelial cell elaboration and cochlear function. Probably involved in the maintenance of normal retinal function. The protein is Protocadherin-15 (Pcdh15) of Gallus gallus (Chicken).